The following is a 130-amino-acid chain: Small ribosomal subunit protein uS9 (130 aa).

The protein belongs to the universal ribosomal protein uS9 family.

This chain is Small ribosomal subunit protein uS9, found in Aeromonas salmonicida (strain A449).